Reading from the N-terminus, the 465-residue chain is Cysteine--tRNA ligase (465 aa).

Residue Cys-27 coordinates Zn(2+). The 'HIGH' region motif lies at 29–39 (PTVYDDAHLGH). Cys-207, His-237, and Glu-241 together coordinate Zn(2+). A 'KMSKS' region motif is present at residues 269–273 (KMSKS). Lys-272 serves as a coordination point for ATP.

This sequence belongs to the class-I aminoacyl-tRNA synthetase family. Monomer. Zn(2+) serves as cofactor.

It localises to the cytoplasm. The enzyme catalyses tRNA(Cys) + L-cysteine + ATP = L-cysteinyl-tRNA(Cys) + AMP + diphosphate. The sequence is that of Cysteine--tRNA ligase from Nitratiruptor sp. (strain SB155-2).